A 696-amino-acid polypeptide reads, in one-letter code: MTHTISGQYGRDTIVLETGNWAKQAHGAVVYKSGNLVLLATVCAADDAKEGQDFFPLTCEYTEKLYSVGRFPGGYFKREAKPPEHEILISRIIDRPIRPLFPEGYFCEVQLQVQVLSADGDVSVAGHALNAASVALTISDIPFNGPIAGARIGRINGELILNPTTKEIVNSDLDLVVAGTKTHIVMIEGEAKELSNEEMLSALRFAQKHIAEFVTLQEEYAKQIGVVKREVKLKARDVELLAKVKEYAFAKLTAANQTPDKTVRNKEISNVNKDVVEFFKQTVEDADKIKDIKTYLHELEYEIVREQVLNQGVRFDGRRLDEIRPISVEINPLPGPHGSSVFTRGQTQSLGVVTLGTGSDNQRYETLEGQKEKSFMLHYNFPAFSVGEVRRSSGPGRREIGHGNLAERALKLVLPKSEEFPYVIRVVSEILESNGSSSMASVCSGSLALMAAGVPIKGSVAGIAMGLFSDSSGKYAVLSDIAGLEDHFGDMDCKIAGTRKGITAFQMDLKVTGVSFDVLESVFEQAQRGRFHILDIMEKHISKASDSLAGTAPRIIVRNIPKDRIGELIGPGGKNVRGISELTGAELYIEDDGRVTISGSNQESAEKAAKMVDGFFAEVEVGKIYEGKVKRIADFGAFVEILPGKEGLCHISKIDFKRVNSVKDIVKEGDIIRVKVLNVDKTGKIDLSRKDALEEI.

Residues aspartate 486 and aspartate 492 each coordinate Mg(2+). The KH domain occupies 553–612 (PRIIVRNIPKDRIGELIGPGGKNVRGISELTGAELYIEDDGRVTISGSNQESAEKAAKMV). An S1 motif domain is found at 622 to 690 (GKIYEGKVKR…KTGKIDLSRK (69 aa)).

The protein belongs to the polyribonucleotide nucleotidyltransferase family. It depends on Mg(2+) as a cofactor.

Its subcellular location is the cytoplasm. It catalyses the reaction RNA(n+1) + phosphate = RNA(n) + a ribonucleoside 5'-diphosphate. Involved in mRNA degradation. Catalyzes the phosphorolysis of single-stranded polyribonucleotides processively in the 3'- to 5'-direction. This chain is Polyribonucleotide nucleotidyltransferase, found in Leptospira borgpetersenii serovar Hardjo-bovis (strain L550).